The sequence spans 148 residues: Large ribosomal subunit protein bL9 (148 aa).

Belongs to the bacterial ribosomal protein bL9 family.

Its function is as follows. Binds to the 23S rRNA. This is Large ribosomal subunit protein bL9 from Oceanobacillus iheyensis (strain DSM 14371 / CIP 107618 / JCM 11309 / KCTC 3954 / HTE831).